The primary structure comprises 590 residues: Acetylcholinesterase (590 aa).

Positions 1 to 24 (MREMNLLVTSSLGVLLHLVVLCQA) are cleaved as a signal peptide. N-linked (GlcNAc...) asparagine glycosylation occurs at Asn83. Cys91 and Cys118 are joined by a disulfide. Residue Ser224 is the Acyl-ester intermediate of the active site. A disulfide bridge links Cys278 with Cys289. Glu351 acts as the Charge relay system in catalysis. A disulfide bridge connects residues Cys426 and Cys545. Asn440 carries N-linked (GlcNAc...) asparagine glycosylation. Catalysis depends on His464, which acts as the Charge relay system. Residues Asn481 and Asn557 are each glycosylated (N-linked (GlcNAc...) asparagine). Ser567 carries GPI-anchor amidated serine lipidation. The propeptide at 568-590 (SGTSSSKGIIFYVLFSILYLIFY) is removed in mature form.

Belongs to the type-B carboxylesterase/lipase family. In terms of assembly, isoform H form is a homodimer; the asymmetric form is a disulfide-bonded oligomer composed of a collagenic subunit (Q) and a variable number of T catalytic subunits. In terms of processing, an interchain disulfide bond is present in what becomes position 596 of the T isoform. As to expression, found in the synapses and to a lower extent in extrajunctional areas of muscle and nerve, and on erythrocyte membranes.

The protein resides in the cell membrane. It localises to the synapse. It catalyses the reaction acetylcholine + H2O = choline + acetate + H(+). Terminates signal transduction at the neuromuscular junction by rapid hydrolysis of the acetylcholine released into the synaptic cleft. May be involved in cell-cell interactions. In Torpedo marmorata (Marbled electric ray), this protein is Acetylcholinesterase (ache).